A 127-amino-acid polypeptide reads, in one-letter code: Large ribosomal subunit protein mL55 (127 aa).

Residues methionine 1–alanine 32 constitute a mitochondrion transit peptide. Phosphoserine is present on serine 84.

It belongs to the mitochondrion-specific ribosomal protein mL55 family. As to quaternary structure, component of the mitochondrial ribosome large subunit (39S) which comprises a 16S rRNA and about 50 distinct proteins.

The protein localises to the mitochondrion. This chain is Large ribosomal subunit protein mL55 (Mrpl55), found in Mus musculus (Mouse).